We begin with the raw amino-acid sequence, 636 residues long: 1-deoxy-D-xylulose-5-phosphate synthase (636 aa).

Residues H74 and 115-117 (GHA) contribute to the thiamine diphosphate site. Mg(2+) is bound at residue D146. Thiamine diphosphate contacts are provided by residues 147 to 148 (GA), N175, Y285, and E368. Position 175 (N175) interacts with Mg(2+).

It belongs to the transketolase family. DXPS subfamily. Homodimer. Requires Mg(2+) as cofactor. It depends on thiamine diphosphate as a cofactor.

The enzyme catalyses D-glyceraldehyde 3-phosphate + pyruvate + H(+) = 1-deoxy-D-xylulose 5-phosphate + CO2. Its pathway is metabolic intermediate biosynthesis; 1-deoxy-D-xylulose 5-phosphate biosynthesis; 1-deoxy-D-xylulose 5-phosphate from D-glyceraldehyde 3-phosphate and pyruvate: step 1/1. Catalyzes the acyloin condensation reaction between C atoms 2 and 3 of pyruvate and glyceraldehyde 3-phosphate to yield 1-deoxy-D-xylulose-5-phosphate (DXP). This Anaeromyxobacter dehalogenans (strain 2CP-1 / ATCC BAA-258) protein is 1-deoxy-D-xylulose-5-phosphate synthase.